Reading from the N-terminus, the 71-residue chain is Bowman-Birk type trypsin inhibitor (71 aa).

Cystine bridges form between C10/C67, C11/C27, C14/C63, C17/C25, C35/C42, and C39/C55.

Belongs to the Bowman-Birk serine protease inhibitor family.

In terms of biological role, inhibits trypsin but not chymotrypsin. The sequence is that of Bowman-Birk type trypsin inhibitor from Triticum aestivum (Wheat).